Reading from the N-terminus, the 755-residue chain is LIM domain and actin-binding protein 1 (755 aa).

The residue at position 1 (Met-1) is an N-acetylmethionine. Ser-15 is subject to Phosphoserine. A compositionally biased stretch (basic and acidic residues) spans 43–56; it reads KAAEEANMERKKNN. A disordered region spans residues 43 to 151; it reads KAAEEANMER…YPRSEDSHDF (109 aa). Residues 88–97 show a composition bias toward polar residues; it reads DSLPNSSSDG. The residue at position 132 (Ser-132) is a Phosphoserine. The Required for interaction with NPC1L1 signature appears at 164–166; that stretch reads CLG. 2 stretches are compositionally biased toward basic and acidic residues: residues 168–177 and 199–208; these read SRHEAEKPEM and MMFEKGEHSQ. The disordered stretch occupies residues 168-226; sequence SRHEAEKPEMSENTETSGKIEKYNVPLNRLKMMFEKGEHSQNKSPWTQGRNAGGRRLSE. Phosphoserine is present on residues Ser-225, Ser-230, and Ser-242. Residues 241-379 are disordered; that stretch reads LSSSAFNSEK…ESSPSKTAKK (139 aa). Positions 249–258 are enriched in basic and acidic residues; sequence EKNESKRNLE. Ser-263 is modified (phosphoserine). Basic and acidic residues predominate over residues 292 to 305; it reads KPSESKTHKWEQKE. The span at 342-354 shows a compositional bias: polar residues; that stretch reads CNSQGRSEAQQPI. Phosphoserine occurs at positions 348, 360, 367, and 372. Residues 363-375 are compositionally biased toward polar residues; it reads ARTSSLPESSPSK. The LIM zinc-binding domain maps to 386–446; it reads ESCVECQKTV…KPHFNQLFKS (61 aa). Position 437 is an N6-succinyllysine (Lys-437). Disordered stretches follow at residues 468–493 and 505–714; these read ENEETLGRPAQPPSAGETPHSPGVED and SMEA…DTTT. Ser-488 bears the Phosphoserine mark. A required for interaction with MYO5B region spans residues 491–511; sequence VEDAPIAKVGVLAASMEAKAS. 2 stretches are compositionally biased toward basic and acidic residues: residues 512 to 526 and 555 to 566; these read SQREREENKPAETKK and WPPEDEVCKTEA. Residues 599–611 are compositionally biased toward low complexity; it reads SSVKSPKPLSPSL. Phosphoserine is present on residues Ser-600, Ser-603, Ser-608, and Ser-616. Basic and acidic residues-rich tracts occupy residues 638 to 653 and 662 to 673; these read RPSREKESVGKSRWQS and EAPRGRDGRSFE. Ser-697, Ser-722, and Ser-737 each carry phosphoserine.

In terms of assembly, interacts with NPC1L1; bridges NPC1L1 with MYO5B. Interacts with MYO5B; bridges MYO5B with NPC1L1. Interacts with PXN; this complex stabilizes actin dynamics. Interacts with F-actin and G-actin. Interacts with LUZP1 (via C-terminus); both proteins restrict ciliation and may work together to regulate this process. Binds RAB40B (GTP-bound); interaction influences LIMA1 subcellular localization in lamellipodia during cell migration. In terms of processing, phosphorylation of the C-terminal region by MAPK1/MAPK3 reduces its association with F-actin and contributes to actin filament reorganization and enhanced cell motility. Post-translationally, ubiquitinated by the ECS(RAB40B) complex leading to its degradation. As to expression, expressed throughout the kidney, including renal cortex, medulla, and glomeruli. Expressed in glomeruli, tubular epithelial cells, and extraglomerular vascular endothelial cells (at protein level).

The protein resides in the cytoplasm. It is found in the cell junction. It localises to the focal adhesion. The protein localises to the cytoskeleton. Its subcellular location is the stress fiber. The protein resides in the cell membrane. It is found in the cell projection. It localises to the ruffle. The protein localises to the lamellipodium. In terms of biological role, actin-binding protein involved in actin cytoskeleton regulation and dynamics. Increases the number and size of actin stress fibers and inhibits membrane ruffling. Inhibits actin filament depolymerization. Bundles actin filaments, delays filament nucleation and reduces formation of branched filaments. Acts as a negative regulator of primary cilium formation. Plays a role in cholesterol homeostasis. Influences plasma cholesterol levels through regulation of intestinal cholesterol absorption. May act as a scaffold protein by regulating NPC1L1 transportation, an essential protein for cholesterol absorption, to the plasma membrane by recruiting MYO5B to NPC1L1, and thus facilitates cholesterol uptake. In Rattus norvegicus (Rat), this protein is LIM domain and actin-binding protein 1.